Here is a 37-residue protein sequence, read N- to C-terminus: MKIRASVRPICEKCRLIRRRGRIIVICSNPKHKQRQG.

Component of the chloroplast large ribosomal subunit (LSU). Mature 70S chloroplast ribosomes of higher plants consist of a small (30S) and a large (50S) subunit. The 30S small subunit contains 1 molecule of ribosomal RNA (16S rRNA) and 24 different proteins. The 50S large subunit contains 3 rRNA molecules (23S, 5S and 4.5S rRNA) and 33 different proteins.

It is found in the plastid. The protein resides in the chloroplast. Component of the chloroplast ribosome (chloro-ribosome), a dedicated translation machinery responsible for the synthesis of chloroplast genome-encoded proteins, including proteins of the transcription and translation machinery and components of the photosynthetic apparatus. The polypeptide is Large ribosomal subunit protein bL36c (rpl36) (Spinacia oleracea (Spinach)).